The primary structure comprises 333 residues: DNA-directed RNA polymerase subunit alpha (333 aa).

The tract at residues Met-1–Lys-234 is alpha N-terminal domain (alpha-NTD). The interval Ile-248–Ala-333 is alpha C-terminal domain (alpha-CTD).

Belongs to the RNA polymerase alpha chain family. In terms of assembly, homodimer. The RNAP catalytic core consists of 2 alpha, 1 beta, 1 beta' and 1 omega subunit. When a sigma factor is associated with the core the holoenzyme is formed, which can initiate transcription.

It carries out the reaction RNA(n) + a ribonucleoside 5'-triphosphate = RNA(n+1) + diphosphate. Its function is as follows. DNA-dependent RNA polymerase catalyzes the transcription of DNA into RNA using the four ribonucleoside triphosphates as substrates. The chain is DNA-directed RNA polymerase subunit alpha from Ectopseudomonas mendocina (strain ymp) (Pseudomonas mendocina).